Consider the following 319-residue polypeptide: ATP-dependent 6-phosphofructokinase (319 aa).

Residues Gly-10, Arg-71–Ser-72, and Gly-101–Ser-104 contribute to the ATP site. Asp-102 contributes to the Mg(2+) binding site. Thr-125–Asp-127 contributes to the substrate binding site. Asp-127 (proton acceptor) is an active-site residue. Position 154 (Arg-154) interacts with ADP. Residues Arg-162 and Met-169–Arg-171 each bind substrate. Residue Gly-185 to Glu-187 participates in ADP binding. Residues Glu-223, Arg-244, and His-250 to Arg-253 contribute to the substrate site.

Belongs to the phosphofructokinase type A (PFKA) family. ATP-dependent PFK group I subfamily. Prokaryotic clade 'B1' sub-subfamily. As to quaternary structure, homotetramer. The cofactor is Mg(2+).

It is found in the cytoplasm. It carries out the reaction beta-D-fructose 6-phosphate + ATP = beta-D-fructose 1,6-bisphosphate + ADP + H(+). Its pathway is carbohydrate degradation; glycolysis; D-glyceraldehyde 3-phosphate and glycerone phosphate from D-glucose: step 3/4. Allosterically activated by ADP and other diphosphonucleosides, and allosterically inhibited by phosphoenolpyruvate. Functionally, catalyzes the phosphorylation of D-fructose 6-phosphate to fructose 1,6-bisphosphate by ATP, the first committing step of glycolysis. In Wolinella succinogenes (strain ATCC 29543 / DSM 1740 / CCUG 13145 / JCM 31913 / LMG 7466 / NCTC 11488 / FDC 602W) (Vibrio succinogenes), this protein is ATP-dependent 6-phosphofructokinase.